We begin with the raw amino-acid sequence, 256 residues long: Late embryogenesis abundant protein 32 (256 aa).

Residues 1 to 14 (MSQEQPRRPREPVK) show a composition bias toward basic and acidic residues. Residues 1–20 (MSQEQPRRPREPVKYGDVFE) are disordered. Positions 5–9 (QPRRP) match the Nuclear localization signal (NLS) motif. SMP domains are found at residues 13 to 66 (VKYG…TTNI), 130 to 187 (ITIG…HNAT), and 195 to 253 (IKLR…LNER).

The protein belongs to the LEA type SMP family. As to expression, embryo specific, only in dry mature seeds. Expressed at low levels.

Its subcellular location is the cytoplasm. It is found in the nucleus. LEA proteins are late embryonic proteins abundant in higher plant seed embryos. The function of those proteins is not known. The protein is Late embryogenesis abundant protein 32 of Arabidopsis thaliana (Mouse-ear cress).